The sequence spans 104 residues: A-type ATP synthase subunit F (104 aa).

It belongs to the V-ATPase F subunit family. In terms of assembly, has multiple subunits with at least A(3), B(3), C, D, E, F, H, I and proteolipid K(x).

The protein resides in the cell membrane. Component of the A-type ATP synthase that produces ATP from ADP in the presence of a proton gradient across the membrane. The polypeptide is A-type ATP synthase subunit F (Thermoplasma acidophilum (strain ATCC 25905 / DSM 1728 / JCM 9062 / NBRC 15155 / AMRC-C165)).